The primary structure comprises 140 residues: NADPH-dependent 7-cyano-7-deazaguanine reductase (140 aa).

Catalysis depends on Cys49, which acts as the Thioimide intermediate. Asp56 acts as the Proton donor in catalysis. Residues 71 to 73 and 90 to 91 each bind substrate; these read IEL and HE.

This sequence belongs to the GTP cyclohydrolase I family. QueF type 1 subfamily.

Its subcellular location is the cytoplasm. It catalyses the reaction 7-aminomethyl-7-carbaguanine + 2 NADP(+) = 7-cyano-7-deazaguanine + 2 NADPH + 3 H(+). The protein operates within tRNA modification; tRNA-queuosine biosynthesis. Catalyzes the NADPH-dependent reduction of 7-cyano-7-deazaguanine (preQ0) to 7-aminomethyl-7-deazaguanine (preQ1). This chain is NADPH-dependent 7-cyano-7-deazaguanine reductase, found in Prochlorococcus marinus (strain NATL2A).